Here is a 291-residue protein sequence, read N- to C-terminus: uncharacterized protein (291 aa).

A run of 6 helical transmembrane segments spans residues 13-33, 40-60, 81-101, 128-148, 158-178, and 220-240; these read FDLFFAAIACICGILKVMEMG, LGTVSKNGMAVLAVLVALGFL, GFLNPCVILSVIEFFMMLICI, FGLFGAIFMPYIFAECIRLLL, VILGILVLGCLAMAGLAYLEY, and GNVWMYLAMFASFTLVLILLA. N249 is a glycosylation site (N-linked (GlcNAc...) asparagine). Positions 269–291 are disordered; sequence MASEDPPKDPLPRQEGGGGDTIA.

It localises to the membrane. This is an uncharacterized protein from Encephalitozoon cuniculi (strain GB-M1) (Microsporidian parasite).